The following is a 406-amino-acid chain: Tryptophan synthase beta chain (406 aa).

An N6-(pyridoxal phosphate)lysine modification is found at lysine 99.

This sequence belongs to the TrpB family. In terms of assembly, tetramer of two alpha and two beta chains. It depends on pyridoxal 5'-phosphate as a cofactor.

The enzyme catalyses (1S,2R)-1-C-(indol-3-yl)glycerol 3-phosphate + L-serine = D-glyceraldehyde 3-phosphate + L-tryptophan + H2O. It participates in amino-acid biosynthesis; L-tryptophan biosynthesis; L-tryptophan from chorismate: step 5/5. Functionally, the beta subunit is responsible for the synthesis of L-tryptophan from indole and L-serine. In Methylobacterium sp. (strain 4-46), this protein is Tryptophan synthase beta chain.